We begin with the raw amino-acid sequence, 150 residues long: D-aminoacyl-tRNA deacylase (150 aa).

The Gly-cisPro motif, important for rejection of L-amino acids signature appears at 138-139 (GP).

Belongs to the DTD family. In terms of assembly, homodimer.

It localises to the cytoplasm. The enzyme catalyses glycyl-tRNA(Ala) + H2O = tRNA(Ala) + glycine + H(+). It carries out the reaction a D-aminoacyl-tRNA + H2O = a tRNA + a D-alpha-amino acid + H(+). Functionally, an aminoacyl-tRNA editing enzyme that deacylates mischarged D-aminoacyl-tRNAs. Also deacylates mischarged glycyl-tRNA(Ala), protecting cells against glycine mischarging by AlaRS. Acts via tRNA-based rather than protein-based catalysis; rejects L-amino acids rather than detecting D-amino acids in the active site. By recycling D-aminoacyl-tRNA to D-amino acids and free tRNA molecules, this enzyme counteracts the toxicity associated with the formation of D-aminoacyl-tRNA entities in vivo and helps enforce protein L-homochirality. This chain is D-aminoacyl-tRNA deacylase, found in Parabacteroides distasonis (strain ATCC 8503 / DSM 20701 / CIP 104284 / JCM 5825 / NCTC 11152).